The following is a 520-amino-acid chain: Ribonuclease Y (520 aa).

Residues 1–21 form a helical membrane-spanning segment; sequence MEILIIVIAAVVGLALGFAIA. The KH domain occupies 210–295; sequence CVSVFNLESD…EVVKKTRKQI (86 aa). In terms of domain architecture, HD spans 336-429; it reads LLQHSREVAK…VQVCDAISGA (94 aa).

This sequence belongs to the RNase Y family.

It localises to the cell membrane. Functionally, endoribonuclease that initiates mRNA decay. This chain is Ribonuclease Y, found in Christiangramia forsetii (strain DSM 17595 / CGMCC 1.15422 / KT0803) (Gramella forsetii).